Reading from the N-terminus, the 1289-residue chain is Trafficking protein particle complex II-specific subunit 120 (1289 aa).

Polar residues predominate over residues 354–365 (STGISPVDSNSK). Positions 354-374 (STGISPVDSNSKATASTTASS) are disordered. Phosphoserine occurs at positions 379 and 387.

The protein belongs to the TRS120 family. In terms of assembly, part of the multisubunit TRAPP (transport protein particle) II complex composed of BET3, BET5, TRS20, TRS23, TRS31, TRS33, TRS65, TRS120 and TRS130. Interacts directly with TRS65.

It localises to the golgi apparatus. It is found in the cis-Golgi network. Its function is as follows. Specific subunit of the TRAPP II complex, a highly conserved vesicle tethering complex that functions in the late Golgi as a guanine nucleotide exchanger (GEF) for the Golgi YPT1 GTPase. TRS120 plays a role in the YPT GEF activity of TRAPP II in concert with the two other TRAPP II-specific subunits TRS65 and TRS130. The polypeptide is Trafficking protein particle complex II-specific subunit 120 (TRS120) (Saccharomyces cerevisiae (strain ATCC 204508 / S288c) (Baker's yeast)).